A 122-amino-acid polypeptide reads, in one-letter code: Large ribosomal subunit protein uL14 (122 aa).

Belongs to the universal ribosomal protein uL14 family. In terms of assembly, part of the 50S ribosomal subunit. Forms a cluster with proteins L3 and L19. In the 70S ribosome, L14 and L19 interact and together make contacts with the 16S rRNA in bridges B5 and B8.

In terms of biological role, binds to 23S rRNA. Forms part of two intersubunit bridges in the 70S ribosome. In Corynebacterium diphtheriae (strain ATCC 700971 / NCTC 13129 / Biotype gravis), this protein is Large ribosomal subunit protein uL14.